The chain runs to 541 residues: MADVTINADEVRSALNDFAASYDPGNVERVEVGRVSSAADGIAHVEGLPSVMANELLKFENGVLGLALNLDTRDIGVVVLGDFQGIEEGQEVHRTGEVLSVPVGEGYLGRVVDPLGEPLDDLGPIATDGRRELELQAPGVTMRKSVHEPLQTGIKAIDAMIPIGRGQRQLIIGDRQTGKTAIAVDAILNQRSNWESGDVEKQVRCIYVAVGQKASTIAAVRQTLEDNGALEYTTIVAAPASESAGLKYLAPYAGSAIGQHWMYGGKHVLIVFDDLSKQAEAYRAVSLLLRRPPGREAYPGDVFYLHSRLLERCAKLSDELGAGSMTGLPIIETKANDVSAFIPTNVISITDGQIFLQSDLFNANQRPAVDVGISVSRVGGAAQVKAMKKVSGTLKLDLASYRSMQAFAMFASDLDAASRQQLTRGERLMELLKQPQYTPYPVADQVVSIWAGTTGQLDDVDVANVADFERALLDQVRRTTNVMDSINSTGKLEDDAVAALKTAVAEVKRDFHGSKHGIEPGVEEHESLGATAVNQETIVKK.

173–180 (GDRQTGKT) contributes to the ATP binding site. The span at 517 to 527 (GIEPGVEEHES) shows a compositional bias: basic and acidic residues. Positions 517 to 541 (GIEPGVEEHESLGATAVNQETIVKK) are disordered. A compositionally biased stretch (polar residues) spans 532–541 (AVNQETIVKK).

This sequence belongs to the ATPase alpha/beta chains family. F-type ATPases have 2 components, CF(1) - the catalytic core - and CF(0) - the membrane proton channel. CF(1) has five subunits: alpha(3), beta(3), gamma(1), delta(1), epsilon(1). CF(0) has three main subunits: a(1), b(2) and c(9-12). The alpha and beta chains form an alternating ring which encloses part of the gamma chain. CF(1) is attached to CF(0) by a central stalk formed by the gamma and epsilon chains, while a peripheral stalk is formed by the delta and b chains.

Its subcellular location is the cell membrane. It carries out the reaction ATP + H2O + 4 H(+)(in) = ADP + phosphate + 5 H(+)(out). Produces ATP from ADP in the presence of a proton gradient across the membrane. The alpha chain is a regulatory subunit. This is ATP synthase subunit alpha from Kocuria rhizophila (strain ATCC 9341 / DSM 348 / NBRC 103217 / DC2201).